Consider the following 515-residue polypeptide: Maturase K (515 aa).

It belongs to the intron maturase 2 family. MatK subfamily.

It localises to the plastid. The protein localises to the chloroplast. Its function is as follows. Usually encoded in the trnK tRNA gene intron. Probably assists in splicing its own and other chloroplast group II introns. The sequence is that of Maturase K from Helonias bullata (Swamp pink).